Consider the following 154-residue polypeptide: Large ribosomal subunit protein bL9 (154 aa).

The protein belongs to the bacterial ribosomal protein bL9 family.

Its function is as follows. Binds to the 23S rRNA. This is Large ribosomal subunit protein bL9 from Buchnera aphidicola subsp. Baizongia pistaciae (strain Bp).